The primary structure comprises 1176 residues: DNA-directed RNA polymerase subunit beta (1176 aa).

Polar residues predominate over residues 13–30 (TDASLHQGRPQSSSNSSV). The tract at residues 13–35 (TDASLHQGRPQSSSNSSVPGAPN) is disordered.

The protein belongs to the RNA polymerase beta chain family. As to quaternary structure, the RNAP catalytic core consists of 2 alpha, 1 beta, 1 beta' and 1 omega subunit. When a sigma factor is associated with the core the holoenzyme is formed, which can initiate transcription.

The enzyme catalyses RNA(n) + a ribonucleoside 5'-triphosphate = RNA(n+1) + diphosphate. In terms of biological role, DNA-dependent RNA polymerase catalyzes the transcription of DNA into RNA using the four ribonucleoside triphosphates as substrates. The polypeptide is DNA-directed RNA polymerase subunit beta (Mycobacterium marinum (strain ATCC BAA-535 / M)).